The following is a 51-amino-acid chain: Light-harvesting protein B-800/850 beta chain (51 aa).

The Cytoplasmic portion of the chain corresponds to 2–23 (ADDANKVWPSGLTTAEAEELQK). A helical membrane pass occupies residues 24 to 46 (GLVDGTRVFGVIAVLAHILAYAY). An a bacteriochlorophyll-binding site is contributed by His40. Residues 47-51 (TPWLH) lie on the Periplasmic side of the membrane.

The protein belongs to the antenna complex beta subunit family. In terms of assembly, an alpha/beta heterodimer conjugated to 3 bacteriochlorophyll molecules. The core complex is formed by different alpha and beta chains, binding bacteriochlorophyll molecules, and arranged most probably in tetrameric structures disposed around the reaction center. The non-pigmented gamma chains may constitute additional components.

It localises to the cell inner membrane. Antenna complexes are light-harvesting systems, which transfer the excitation energy to the reaction centers. The protein is Light-harvesting protein B-800/850 beta chain (pucB) of Rubrivivax gelatinosus (Rhodocyclus gelatinosus).